The chain runs to 88 residues: Small ribosomal subunit protein uS17 (88 aa).

This sequence belongs to the universal ribosomal protein uS17 family. Part of the 30S ribosomal subunit.

Its function is as follows. One of the primary rRNA binding proteins, it binds specifically to the 5'-end of 16S ribosomal RNA. In Prochlorococcus marinus (strain MIT 9301), this protein is Small ribosomal subunit protein uS17.